A 319-amino-acid polypeptide reads, in one-letter code: Red chlorophyll catabolite reductase, chloroplastic (319 aa).

The transit peptide at 1–39 (MAMIFCNTLYSSSSPSYLSPLTSKPSRFSKNLRPRAQFQ) directs the protein to the chloroplast. Red chlorophyll catabolite is bound by residues Glu-154 and 207 to 209 (YVS). Residues 255–286 (LERCVKEEEEKIVVGEEERMELERRDKSFRRK) adopt a coiled-coil conformation. Asp-291 contributes to the red chlorophyll catabolite binding site.

As to quaternary structure, homodimer. Interacts with HCAR. Interacts with SGR1, NYC1, NOL, PPH, PAO and the LHCII complex. Part of a SGR1-CCE-LHCII complex, which acts in chlorophyll breakdown. In terms of tissue distribution, expressed in all tissues tested, including roots.

The protein localises to the plastid. Its subcellular location is the chloroplast stroma. It localises to the chloroplast thylakoid membrane. The enzyme catalyses primary fluorescent chlorophyll catabolite + 2 oxidized [2Fe-2S]-[ferredoxin] = red chlorophyll catabolite + 2 reduced [2Fe-2S]-[ferredoxin] + 3 H(+). It participates in porphyrin-containing compound metabolism; chlorophyll degradation. Its function is as follows. Catalyzes the key reaction of chlorophyll catabolism, porphyrin macrocycle cleavage of pheophorbide a (pheide a) to a primary fluorescent catabolite (pFCC). Works in a two-step reaction with pheophorbide a oxygenase (PaO) by reducing the C20/C1 double bond of the intermediate, RCC. Belongs to the chlorophyll catabolic enzymes (CCEs). This chain is Red chlorophyll catabolite reductase, chloroplastic, found in Arabidopsis thaliana (Mouse-ear cress).